We begin with the raw amino-acid sequence, 395 residues long: Gastric triacylglycerol lipase (395 aa).

An N-terminal signal peptide occupies residues M1–G18. Residue N33 is glycosylated (N-linked (GlcNAc...) asparagine). The AB hydrolase-1 domain maps to L81–W376. S171 functions as the Nucleophile in the catalytic mechanism. C245 and C254 are disulfide-bonded. N270 is a glycosylation site (N-linked (GlcNAc...) asparagine). Residues D342 and H371 each act as charge relay system in the active site.

This sequence belongs to the AB hydrolase superfamily. Lipase family.

The protein localises to the secreted. The enzyme catalyses a triacylglycerol + H2O = a diacylglycerol + a fatty acid + H(+). It carries out the reaction 1,2,3-tri-(9Z-octadecenoyl)-glycerol + H2O = 1,2-di-(9Z-octadecenoyl)-sn-glycerol + (9Z)-octadecenoate + H(+). It catalyses the reaction 1,2,3-trioctanoylglycerol + H2O = 1,2-dioctanoyl-sn-glycerol + octanoate + H(+). Catalyzes the hydrolysis of triacylglycerols to yield free fatty acids, diacylglycerol, monoacylglycerol, and glycerol. Shows a preferential hydrolysis at the sn-3 position of triacylglycerol. In Mus musculus (Mouse), this protein is Gastric triacylglycerol lipase (Lipf).